Reading from the N-terminus, the 77-residue chain is Conotoxin S6.11 (77 aa).

A signal peptide spans Met1–Ala19. A propeptide spanning residues Leu20–Glu50 is cleaved from the precursor. Disulfide bonds link Cys51/Cys65, Cys58/Cys69, and Cys64/Cys74.

Belongs to the conotoxin O2 superfamily. Expressed by the venom duct.

Its subcellular location is the secreted. In Conus striatus (Striated cone), this protein is Conotoxin S6.11.